The sequence spans 1324 residues: Myotubularin-related protein DDB_G0290005 (1324 aa).

Positions K140–T276 are disordered. Residues N144–T180 are compositionally biased toward low complexity. Polar residues predominate over residues D181 to Q194. Positions N195–N222 are enriched in low complexity. The segment covering S223–E247 has biased composition (polar residues). The span at S248–T276 shows a compositional bias: low complexity. Residues G349–F807 enclose the Myotubularin phosphatase domain. Substrate-binding positions include N514–I515, C575–R581, and R621. C575 acts as the Phosphocysteine intermediate in catalysis. 5 disordered regions span residues Q624–S664, Q841–E1043, E1066–T1110, R1144–P1213, and L1232–S1296. Composition is skewed to low complexity over residues S625–S664 and G852–S864. Positions S865–K882 are enriched in basic residues. Residues S883–S894 are compositionally biased toward basic and acidic residues. Composition is skewed to low complexity over residues S899–S914 and T927–P973. A compositionally biased stretch (basic and acidic residues) spans D988–Q1002. The span at M1005–N1024 shows a compositional bias: polar residues. A coiled-coil region spans residues S1020 to I1195. The span at Q1025 to E1043 shows a compositional bias: low complexity. A compositionally biased stretch (polar residues) spans P1079 to D1090. Positions S1091–Q1109 are enriched in low complexity. The span at R1144 to A1193 shows a compositional bias: basic and acidic residues. A compositionally biased stretch (polar residues) spans P1234 to T1243. Composition is skewed to low complexity over residues N1244–N1258 and S1265–N1294.

The protein belongs to the protein-tyrosine phosphatase family. Non-receptor class myotubularin subfamily.

The protein localises to the cytoplasm. In terms of biological role, phosphatase that acts on lipids with a phosphoinositol headgroup. This chain is Myotubularin-related protein DDB_G0290005, found in Dictyostelium discoideum (Social amoeba).